Consider the following 276-residue polypeptide: ARL14 effector protein (276 aa).

Residues K158–A177 are disordered. K176 participates in a covalent cross-link: Glycyl lysine isopeptide (Lys-Gly) (interchain with G-Cter in SUMO2). Phosphoserine is present on residues S182 and S266.

As to quaternary structure, interacts with ARL14 and MYO1E.

It is found in the cytoplasm. In terms of biological role, through its interaction with ARL14 and MYO1E, may connect MHC class II-containing cytoplasmic vesicles to the actin network and hence controls the movement of these vesicles along the actin cytoskeleton in dendritic cells. The sequence is that of ARL14 effector protein (Arl14ep) from Mus musculus (Mouse).